A 201-amino-acid polypeptide reads, in one-letter code: Potassium-transporting ATPase KdpC subunit (201 aa).

A helical transmembrane segment spans residues 7 to 27 (PALVLLVALTAITGLAYPLAV).

The protein belongs to the KdpC family. As to quaternary structure, the system is composed of three essential subunits: KdpA, KdpB and KdpC.

It localises to the cell inner membrane. Functionally, part of the high-affinity ATP-driven potassium transport (or Kdp) system, which catalyzes the hydrolysis of ATP coupled with the electrogenic transport of potassium into the cytoplasm. This subunit acts as a catalytic chaperone that increases the ATP-binding affinity of the ATP-hydrolyzing subunit KdpB by the formation of a transient KdpB/KdpC/ATP ternary complex. This chain is Potassium-transporting ATPase KdpC subunit, found in Methylorubrum extorquens (strain CM4 / NCIMB 13688) (Methylobacterium extorquens).